The following is a 100-amino-acid chain: RxLR effector protein SFI8 (100 aa).

The N-terminal stretch at 1 to 22 (MRSILYAVLAFAVLARSSAVAA) is a signal peptide. Residues 43–57 (RSLRVEAQEVIQSGR) carry the RxLR-dEER motif. The short motif at 78-82 (KPDIK) is the Calmodulin-binding motif element.

It belongs to the RxLR effector family. In terms of assembly, interacts with the host calmodulin.

The protein resides in the secreted. It is found in the host nucleus. The protein localises to the host cytoplasm. In terms of biological role, effector that suppresses flg22-induced post-translational MAP kinase activation both tomato and Arabidopsis. The perception of highly conserved pathogen- or microbe-associated molecular patterns (PAMPs/MAMPs), such as flg22, triggers converging signaling pathways recruiting MAP kinase cascades and inducing transcriptional re-programming, yielding a generic antimicrobial response. Associates with calmodulin to interfere with plant defense-associated calcium signaling in hosts. This is RxLR effector protein SFI8 from Phytophthora infestans (strain T30-4) (Potato late blight agent).